Consider the following 284-residue polypeptide: Pantothenate synthetase (284 aa).

Residue 30–37 (MGALHNGH) participates in ATP binding. The active-site Proton donor is H37. Residue Q61 participates in (R)-pantoate binding. Q61 is a beta-alanine binding site. 147–150 (GEKD) contacts ATP. Q153 provides a ligand contact to (R)-pantoate. ATP-binding positions include L176 and 184–187 (SSSR).

Belongs to the pantothenate synthetase family. Homodimer.

Its subcellular location is the cytoplasm. It catalyses the reaction (R)-pantoate + beta-alanine + ATP = (R)-pantothenate + AMP + diphosphate + H(+). The protein operates within cofactor biosynthesis; (R)-pantothenate biosynthesis; (R)-pantothenate from (R)-pantoate and beta-alanine: step 1/1. Catalyzes the condensation of pantoate with beta-alanine in an ATP-dependent reaction via a pantoyl-adenylate intermediate. The protein is Pantothenate synthetase of Bartonella henselae (strain ATCC 49882 / DSM 28221 / CCUG 30454 / Houston 1) (Rochalimaea henselae).